The sequence spans 85 residues: Phosphocarrier protein HPr (85 aa).

Positions 1–85 (MFQRDIKITT…DLAKFLTTLK (85 aa)) constitute an HPr domain. Catalysis depends on His15, which acts as the Pros-phosphohistidine intermediate.

It belongs to the HPr family.

The protein localises to the cytoplasm. In terms of biological role, general (non sugar-specific) component of the phosphoenolpyruvate-dependent sugar phosphotransferase system (sugar PTS). This major carbohydrate active-transport system catalyzes the phosphorylation of incoming sugar substrates concomitantly with their translocation across the cell membrane. The phosphoryl group from phosphoenolpyruvate (PEP) is transferred to the phosphoryl carrier protein HPr by enzyme I. Phospho-HPr then transfers it to the PTS EIIA domain. This chain is Phosphocarrier protein HPr (ptsH), found in Buchnera aphidicola subsp. Baizongia pistaciae (strain Bp).